We begin with the raw amino-acid sequence, 184 residues long: Endoribonuclease YbeY (184 aa).

Residues His-146, His-150, and His-156 each contribute to the Zn(2+) site.

This sequence belongs to the endoribonuclease YbeY family. The cofactor is Zn(2+).

The protein localises to the cytoplasm. In terms of biological role, single strand-specific metallo-endoribonuclease involved in late-stage 70S ribosome quality control and in maturation of the 3' terminus of the 16S rRNA. In Nostoc sp. (strain PCC 7120 / SAG 25.82 / UTEX 2576), this protein is Endoribonuclease YbeY.